Reading from the N-terminus, the 113-residue chain is Small ribosomal subunit protein bS6 (113 aa).

It belongs to the bacterial ribosomal protein bS6 family.

Binds together with bS18 to 16S ribosomal RNA. This is Small ribosomal subunit protein bS6 from Ruthia magnifica subsp. Calyptogena magnifica.